A 29-amino-acid chain; its full sequence is Cytochrome b6-f complex subunit 8 (29 aa).

Residues 3–23 (IVSLGWAFLMVVFSFSLSLVV) traverse the membrane as a helical segment.

This sequence belongs to the PetN family. In terms of assembly, the 4 large subunits of the cytochrome b6-f complex are cytochrome b6, subunit IV (17 kDa polypeptide, PetD), cytochrome f and the Rieske protein, while the 4 small subunits are PetG, PetL, PetM and PetN. The complex functions as a dimer.

Its subcellular location is the plastid. The protein localises to the chloroplast thylakoid membrane. Component of the cytochrome b6-f complex, which mediates electron transfer between photosystem II (PSII) and photosystem I (PSI), cyclic electron flow around PSI, and state transitions. This is Cytochrome b6-f complex subunit 8 from Chlorokybus atmophyticus (Soil alga).